Here is a 329-residue protein sequence, read N- to C-terminus: NADH-quinone oxidoreductase subunit H (329 aa).

Helical transmembrane passes span 9–29, 42–62, 75–95, 117–137, 154–174, 188–208, 238–258, 269–291, and 309–329; these read LIKI…ATYI, GPCY…IKLF, FIFT…MAPI, IGFL…ILAG, IQLL…LMVV, GGFL…FLIA, LKWG…SFVI, WGFI…LSMW, and WKIM…IILI.

It belongs to the complex I subunit 1 family. In terms of assembly, NDH-1 is composed of 14 different subunits. Subunits NuoA, H, J, K, L, M, N constitute the membrane sector of the complex.

The protein localises to the cell inner membrane. It catalyses the reaction a quinone + NADH + 5 H(+)(in) = a quinol + NAD(+) + 4 H(+)(out). Functionally, NDH-1 shuttles electrons from NADH, via FMN and iron-sulfur (Fe-S) centers, to quinones in the respiratory chain. The immediate electron acceptor for the enzyme in this species is believed to be ubiquinone. Couples the redox reaction to proton translocation (for every two electrons transferred, four hydrogen ions are translocated across the cytoplasmic membrane), and thus conserves the redox energy in a proton gradient. This subunit may bind ubiquinone. The sequence is that of NADH-quinone oxidoreductase subunit H from Helicobacter pylori (strain HPAG1).